The chain runs to 221 residues: Cytochrome c biogenesis ATP-binding export protein CcmA (221 aa).

In terms of domain architecture, ABC transporter spans 14 to 221 (LACHDVSCLR…FDLLDESHFS (208 aa)). 46–53 (GANGIGKS) is an ATP binding site.

The protein belongs to the ABC transporter superfamily. CcmA exporter (TC 3.A.1.107) family. In terms of assembly, the complex is composed of two ATP-binding proteins (CcmA) and two transmembrane proteins (CcmB).

It is found in the cell inner membrane. The catalysed reaction is heme b(in) + ATP + H2O = heme b(out) + ADP + phosphate + H(+). In terms of biological role, part of the ABC transporter complex CcmAB involved in the biogenesis of c-type cytochromes; once thought to export heme, this seems not to be the case, but its exact role is uncertain. Responsible for energy coupling to the transport system. The polypeptide is Cytochrome c biogenesis ATP-binding export protein CcmA (Zymomonas mobilis subsp. mobilis (strain ATCC 31821 / ZM4 / CP4)).